The following is a 430-amino-acid chain: Delta(14)-sterol reductase (430 aa).

6 consecutive transmembrane segments (helical) span residues 12 to 32, 67 to 87, 109 to 129, 230 to 250, 267 to 287, and 290 to 310; these read IGTG…HFLI, LAVA…PAEI, FLVF…TWWF, FVSD…VDAL, LGVM…CLQA, and LASF…AVQF. Residues lysine 323, arginine 327, leucine 350, tryptophan 355, and 362–363 each bind NADP(+); that span reads NY. 2 consecutive transmembrane segments (helical) span residues 349–369 and 376–396; these read LLIS…DWIM and TTGF…ILLL. Residues aspartate 402, 406–410, and tyrosine 417 contribute to the NADP(+) site; that span reads CREKY.

The protein belongs to the ERG4/ERG24 family.

It is found in the membrane. The enzyme catalyses 4,4-dimethyl-5alpha-cholesta-8,24-dien-3beta-ol + NADP(+) = 4,4-dimethyl-5alpha-cholesta-8,14,24-trien-3beta-ol + NADPH + H(+). It functions in the pathway steroid biosynthesis; zymosterol biosynthesis; zymosterol from lanosterol: step 2/6. In terms of biological role, reduces the C14=C15 double bond of 4,4-dimethyl-cholesta-8,14,24-trienol to produce 4,4-dimethyl-cholesta-8,24-dienol. This is Delta(14)-sterol reductase (ERG3) from Ascobolus immersus.